We begin with the raw amino-acid sequence, 215 residues long: Vesicle transport protein SFT2C (215 aa).

The Cytoplasmic segment spans residues 1-82 (MADLHRQLQE…RGQRLAAGGG (82 aa)). A helical transmembrane segment spans residues 83–103 (CLLLAALCFGLAALYAPVLLL). Residues 104–107 (RARK) lie on the Lumenal side of the membrane. Residues 108-128 (FALLWSLGSALALAGSALLRG) form a helical membrane-spanning segment. Over 129–142 (GAACGRLLRCEEAP) the chain is Cytoplasmic. A helical membrane pass occupies residues 143-163 (SRPALLYMAALGATLFAALGL). Residues 164–166 (RST) are Lumenal-facing. The chain crosses the membrane as a helical span at residues 167 to 187 (LLTVLGAGAQVAALLAALVGL). Residues 188–215 (LPWGGGTALRLALGRLGRGAGLAKVLPV) are Cytoplasmic-facing.

The protein belongs to the SFT2 family.

It is found in the membrane. May be involved in fusion of retrograde transport vesicles derived from an endocytic compartment with the Golgi complex. This chain is Vesicle transport protein SFT2C, found in Homo sapiens (Human).